Reading from the N-terminus, the 352-residue chain is Inorganic triphosphatase (352 aa).

The 198-residue stretch at Leu-6–Gln-203 folds into the CYTH domain.

The enzyme catalyses triphosphate + H2O = phosphate + diphosphate. In terms of biological role, involved in the hydrolysis of the beta-gamma-phosphoanhydride linkage of triphosphate-containing substrates (inorganic or nucleoside-linked). Catalyzes the hydrolysis of inorganic triphosphate (PPPi), which could be cytotoxic because of its high affinity for calcium ion, thereby interfering with calcium signaling. This is Inorganic triphosphatase from Haemophilus influenzae (strain ATCC 51907 / DSM 11121 / KW20 / Rd).